Reading from the N-terminus, the 520-residue chain is Amphoterin-induced protein 2 (520 aa).

A signal peptide spans 1–37; it reads MSLRFHTLPTLPRAVKPGCRELLCLLVIAVMVSPSSS. Residues 38 to 67 form the LRRNT domain; it reads GLCPTACICATDIVSCTNKNLSKVPGNLFR. Topologically, residues 38-398 are extracellular; sequence GLCPTACICA…SHHAHEAFNT (361 aa). 2 disulfides stabilise this stretch: cysteine 40–cysteine 46 and cysteine 44–cysteine 53. Asparagine 57 carries an N-linked (GlcNAc...) asparagine glycan. LRR repeat units lie at residues 68–89, 93–114, 117–138, 141–162, 165–186, and 192–213; these read LIKR…WIPV, KLST…SFST, NLKC…MFQE, VLEV…AFGG, HLQK…LYVG, and DLTF…HINL. An N-linked (GlcNAc...) asparagine glycan is attached at asparagine 103. In terms of domain architecture, LRRCT spans 227–283; it reads NPFVCDCSLYSLLTFWYRRHFNSVTDFKHDYTCRLWLDSRHSHQLLLLQDSFLNCSH. Intrachain disulfides connect cysteine 231–cysteine 259 and cysteine 233–cysteine 281. 7 N-linked (GlcNAc...) asparagine glycosylation sites follow: asparagine 280, asparagine 287, asparagine 344, asparagine 372, asparagine 380, asparagine 383, and asparagine 387. The region spanning 288–378 is the Ig-like C2-type domain; sequence GSFHALGFIH…RLLNETVDIM (91 aa). The cysteines at positions 309 and 362 are disulfide-linked. The helical transmembrane segment at 399 to 419 threads the bilayer; sequence AFTTLAACVVSIVLVLLYLYL. At 420–520 the chain is on the cytoplasmic side; it reads TPCPCKCRDK…FSDTPFVAST (101 aa). 2 disordered regions span residues 437 to 458 and 498 to 520; these read QSNA…AEDR and SRAK…VAST.

Belongs to the immunoglobulin superfamily. AMIGO family. Binds itself as well as AMIGO1 and AMIGO3. Highest levels in the lung. High levels in cerebellar granule neurons and Purkinje cells. Also in pyramidal cells between CA1 and CA3 regions of the hippocampus and granule cells of the dentate gyrus.

The protein resides in the cell membrane. Its subcellular location is the nucleus. Its function is as follows. Required for depolarization-dependent survival of cultured cerebellar granule neurons. May mediate homophilic as well as heterophilic cell-cell interaction with AMIGO1 or AMIGO3. May contribute to signal transduction through its intracellular domain. The chain is Amphoterin-induced protein 2 from Rattus norvegicus (Rat).